The primary structure comprises 153 residues: H/ACA ribonucleoprotein complex subunit 2 (153 aa).

K3 participates in a covalent cross-link: Glycyl lysine isopeptide (Lys-Gly) (interchain with G-Cter in SUMO2). K5 participates in a covalent cross-link: Glycyl lysine isopeptide (Lys-Gly) (interchain with G-Cter in SUMO); alternate. K5 is covalently cross-linked (Glycyl lysine isopeptide (Lys-Gly) (interchain with G-Cter in SUMO1); alternate). Residue K5 forms a Glycyl lysine isopeptide (Lys-Gly) (interchain with G-Cter in SUMO2); alternate linkage. S19 bears the Phosphoserine mark.

Belongs to the eukaryotic ribosomal protein eL8 family. Part of the H/ACA small nucleolar ribonucleoprotein (H/ACA snoRNP) complex, which contains NHP2/NOLA2, GAR1/NOLA1, NOP10/NOLA3, and DKC1/NOLA4, which is presumed to be the catalytic subunit. The complex contains a stable core formed by binding of one or two NOP10-DKC1 heterodimers to NHP2; GAR1 subsequently binds to this core via DKC1. The complex binds a box H/ACA small nucleolar RNA (snoRNA), which may target the specific site of modification within the RNA substrate. During assembly, the complex contains NAF1 instead of GAR1/NOLA1. The complex also interacts with TERC, which contains a 3'-terminal domain related to the box H/ACA snoRNAs. Specific interactions with snoRNAs or TERC are mediated by GAR1 and NHP2. Associates with NOLC1/NOPP140. H/ACA snoRNPs interact with the SMN complex, consisting of SMN1 or SMN2, GEMIN2/SIP1, DDX20/GEMIN3, and GEMIN4. This is mediated by interaction between GAR1 and SMN1 or SMN2. The SMN complex may be required for correct assembly of the H/ACA snoRNP complex. Component of the telomerase holoenzyme complex composed of one molecule of TERT, one molecule of WRAP53/TCAB1, two molecules of H/ACA ribonucleoprotein complex subunits DKC1, NOP10, NHP2 and GAR1, and a telomerase RNA template component (TERC). The telomerase holoenzyme complex is associated with TEP1, SMG6/EST1A and POT1.

It is found in the nucleus. The protein resides in the nucleolus. It localises to the cajal body. Its function is as follows. Required for ribosome biogenesis and telomere maintenance. Part of the H/ACA small nucleolar ribonucleoprotein (H/ACA snoRNP) complex, which catalyzes pseudouridylation of rRNA. This involves the isomerization of uridine such that the ribose is subsequently attached to C5, instead of the normal N1. Each rRNA can contain up to 100 pseudouridine ('psi') residues, which may serve to stabilize the conformation of rRNAs. May also be required for correct processing or intranuclear trafficking of TERC, the RNA component of the telomerase reverse transcriptase (TERT) holoenzyme. This is H/ACA ribonucleoprotein complex subunit 2 (Nhp2) from Mus musculus (Mouse).